The primary structure comprises 557 residues: Probable protein kinase UbiB (557 aa).

One can recognise a Protein kinase domain in the interval 121–509 (SFDTVPLASA…RKLQTRVVTA (389 aa)). ATP-binding positions include 127–135 (LASASIAQV) and lysine 154. Aspartate 289 serves as the catalytic Proton acceptor. A run of 2 helical transmembrane segments spans residues 506–526 (VVTA…YGLH) and 535–555 (VPVW…VAWL).

Belongs to the ABC1 family. UbiB subfamily.

The protein localises to the cell inner membrane. Its pathway is cofactor biosynthesis; ubiquinone biosynthesis [regulation]. In terms of biological role, is probably a protein kinase regulator of UbiI activity which is involved in aerobic coenzyme Q (ubiquinone) biosynthesis. This Xanthomonas axonopodis pv. citri (strain 306) protein is Probable protein kinase UbiB.